Here is a 490-residue protein sequence, read N- to C-terminus: Aspartyl/glutamyl-tRNA(Asn/Gln) amidotransferase subunit B (490 aa).

Belongs to the GatB/GatE family. GatB subfamily. As to quaternary structure, heterotrimer of A, B and C subunits.

The enzyme catalyses L-glutamyl-tRNA(Gln) + L-glutamine + ATP + H2O = L-glutaminyl-tRNA(Gln) + L-glutamate + ADP + phosphate + H(+). It carries out the reaction L-aspartyl-tRNA(Asn) + L-glutamine + ATP + H2O = L-asparaginyl-tRNA(Asn) + L-glutamate + ADP + phosphate + 2 H(+). In terms of biological role, allows the formation of correctly charged Asn-tRNA(Asn) or Gln-tRNA(Gln) through the transamidation of misacylated Asp-tRNA(Asn) or Glu-tRNA(Gln) in organisms which lack either or both of asparaginyl-tRNA or glutaminyl-tRNA synthetases. The reaction takes place in the presence of glutamine and ATP through an activated phospho-Asp-tRNA(Asn) or phospho-Glu-tRNA(Gln). The chain is Aspartyl/glutamyl-tRNA(Asn/Gln) amidotransferase subunit B from Methylorubrum extorquens (strain PA1) (Methylobacterium extorquens).